We begin with the raw amino-acid sequence, 141 residues long: ATP synthase epsilon chain (141 aa).

Belongs to the ATPase epsilon chain family. As to quaternary structure, F-type ATPases have 2 components, CF(1) - the catalytic core - and CF(0) - the membrane proton channel. CF(1) has five subunits: alpha(3), beta(3), gamma(1), delta(1), epsilon(1). CF(0) has three main subunits: a, b and c.

Its subcellular location is the cell inner membrane. In terms of biological role, produces ATP from ADP in the presence of a proton gradient across the membrane. This Hahella chejuensis (strain KCTC 2396) protein is ATP synthase epsilon chain.